Reading from the N-terminus, the 55-residue chain is Large ribosomal subunit protein bL33 (55 aa).

Belongs to the bacterial ribosomal protein bL33 family.

This Brucella abortus (strain S19) protein is Large ribosomal subunit protein bL33.